The sequence spans 306 residues: Heterogeneous nuclear ribonucleoproteins C1/C2 (306 aa).

At Ala2 the chain carries N-acetylalanine. Glycyl lysine isopeptide (Lys-Gly) (interchain with G-Cter in SUMO2) cross-links involve residues Lys8, Lys50, Lys89, and Lys94. Residues 16-87 enclose the RRM domain; sequence SRVFIGNLNT…QVLDINLAAE (72 aa). A phosphoserine mark is found at Ser107 and Val108. Thr109 carries the post-translational modification Phosphothreonine. Phosphoserine occurs at positions 113, 115, and 121. Disordered stretches follow at residues 139–190 and 221–306; these read YPAR…KLKG and QSKQ…EDDS. The short motif at 155-161 is the Nuclear localization signal element; sequence PSKRQRV. 2 positions are modified to phosphoserine: Ser162 and Ser166. The span at 175–185 shows a compositional bias: low complexity; sequence SKSGQRGSSKS. Lys176 carries the post-translational modification N6-acetyllysine; alternate. A Glycyl lysine isopeptide (Lys-Gly) (interchain with G-Cter in SUMO2); alternate cross-link involves residue Lys176. The stretch at 190–238 forms a coiled coil; that stretch reads GDDLQAIKKELTQIKQKVDSLLENLEKIEKEQSKQAVEMKNDKSEEEQS. Over residues 221–232 the composition is skewed to basic and acidic residues; the sequence is QSKQAVEMKNDK. Glycyl lysine isopeptide (Lys-Gly) (interchain with G-Cter in SUMO2) cross-links involve residues Lys223 and Lys229. Lys232 is covalently cross-linked (Glycyl lysine isopeptide (Lys-Gly) (interchain with G-Cter in SUMO2); alternate). Lys232 is covalently cross-linked (Glycyl lysine isopeptide (Lys-Gly) (interchain with G-Cter in SUMO1); alternate). A phosphoserine mark is found at Ser233, Ser238, Ser239, and Ser241. Basic and acidic residues predominate over residues 242–253; it reads VKKDETNVKMES. Glycyl lysine isopeptide (Lys-Gly) (interchain with G-Cter in SUMO2) cross-links involve residues Lys243 and Lys244. Residue Lys250 forms a Glycyl lysine isopeptide (Lys-Gly) (interchain with G-Cter in SUMO2); alternate linkage. Lys250 participates in a covalent cross-link: Glycyl lysine isopeptide (Lys-Gly) (interchain with G-Cter in SUMO); alternate. Phosphoserine is present on residues Ser253 and Ser260. Residues 255 to 276 are compositionally biased toward acidic residues; the sequence is GGADDSAEEGDLLDDDDNEDRG. Basic and acidic residues predominate over residues 277-287; the sequence is DDQLELIKDDE. Acidic residues predominate over residues 288-306; the sequence is KEAEEGEDDRDSANGEDDS. Residues Ser299 and Ser306 each carry the phosphoserine modification.

The protein belongs to the RRM HNRPC family. RALY subfamily. In terms of assembly, tetramer composed of 3 copies of isoform C1 and 1 copy of isoform C2. Assembly of 3 tetramers with bound pre-mRNA gives rise to a 19S complex that interacts with HNRNPA2B1 tetramers. Component of the 40S hnRNP particle. Identified in the spliceosome C complex. Interacts with IGF2BP1. Interacts with DHX9; this interaction is direct, enhanced probably by their concomitant binding to RNA and mediates the attachment to actin filaments. Interacts with PPIA/CYPA. Interacts with YWHAE. In terms of processing, phosphorylated on Ser-260 and Ser-299 in resting cells. Phosphorylated on Ser-253 and on 1 serine residue in the poly-Ser stretch at position 238 in response to hydrogen peroxide. Post-translationally, sumoylated. Sumoylation reduces affinity for mRNA. Ubiquitinated and degraded after nucleo-cytoplasmic transport by YWHAE.

The protein localises to the nucleus. Functionally, binds pre-mRNA and nucleates the assembly of 40S hnRNP particles. Interacts with poly-U tracts in the 3'-UTR or 5'-UTR of mRNA and modulates the stability and the level of translation of bound mRNA molecules. Single HNRNPC tetramers bind 230-240 nucleotides. Trimers of HNRNPC tetramers bind 700 nucleotides. May play a role in the early steps of spliceosome assembly and pre-mRNA splicing. N6-methyladenosine (m6A) has been shown to alter the local structure in mRNAs and long non-coding RNAs (lncRNAs) via a mechanism named 'm(6)A-switch', facilitating binding of HNRNPC, leading to regulation of mRNA splicing. This is Heterogeneous nuclear ribonucleoproteins C1/C2 (HNRNPC) from Homo sapiens (Human).